A 190-amino-acid chain; its full sequence is Small ribosomal subunit protein uS4 (190 aa).

The S4 RNA-binding domain maps to 105 to 181; sequence RRLQTLVYKL…RKKAKAAEGG (77 aa). The segment at 163–190 is disordered; sequence GGGRPGRVRRKKAKAAEGGDGDAEEDEE. The segment covering 181 to 190 has biased composition (acidic residues); sequence GDGDAEEDEE.

The protein belongs to the universal ribosomal protein uS4 family.

This is Small ribosomal subunit protein uS4 (RPS9) from Podospora anserina (Pleurage anserina).